The primary structure comprises 641 residues: Chaperone protein DnaK 2 (641 aa).

Phosphothreonine; by autocatalysis is present on T199. Low complexity predominate over residues 601–616; it reads MAQQQAQAQHAQSSQQ. The tract at residues 601-641 is disordered; that stretch reads MAQQQAQAQHAQSSQQTNDTTGQSSTDDDVFEAEFEEVKDK. The span at 626-635 shows a compositional bias: acidic residues; sequence TDDDVFEAEF.

The protein belongs to the heat shock protein 70 family.

Functionally, acts as a chaperone. In Photobacterium profundum (strain SS9), this protein is Chaperone protein DnaK 2.